The sequence spans 233 residues: Leucyl/phenylalanyl-tRNA--protein transferase (233 aa).

This sequence belongs to the L/F-transferase family.

The protein resides in the cytoplasm. The catalysed reaction is N-terminal L-lysyl-[protein] + L-leucyl-tRNA(Leu) = N-terminal L-leucyl-L-lysyl-[protein] + tRNA(Leu) + H(+). It catalyses the reaction N-terminal L-arginyl-[protein] + L-leucyl-tRNA(Leu) = N-terminal L-leucyl-L-arginyl-[protein] + tRNA(Leu) + H(+). It carries out the reaction L-phenylalanyl-tRNA(Phe) + an N-terminal L-alpha-aminoacyl-[protein] = an N-terminal L-phenylalanyl-L-alpha-aminoacyl-[protein] + tRNA(Phe). Functions in the N-end rule pathway of protein degradation where it conjugates Leu, Phe and, less efficiently, Met from aminoacyl-tRNAs to the N-termini of proteins containing an N-terminal arginine or lysine. This is Leucyl/phenylalanyl-tRNA--protein transferase from Anaeromyxobacter dehalogenans (strain 2CP-C).